The primary structure comprises 341 residues: L-threonine 3-dehydrogenase (341 aa).

Zn(2+) is bound at residue C38. Residues T40 and H43 each act as charge relay system in the active site. 6 residues coordinate Zn(2+): H63, E64, C93, C96, C99, and C107. NAD(+) is bound by residues I175, D195, R200, 262-264 (LGI), and 286-287 (IY).

The protein belongs to the zinc-containing alcohol dehydrogenase family. Homotetramer. Zn(2+) serves as cofactor.

The protein resides in the cytoplasm. It catalyses the reaction L-threonine + NAD(+) = (2S)-2-amino-3-oxobutanoate + NADH + H(+). It functions in the pathway amino-acid degradation; L-threonine degradation via oxydo-reductase pathway; glycine from L-threonine: step 1/2. In terms of biological role, catalyzes the NAD(+)-dependent oxidation of L-threonine to 2-amino-3-ketobutyrate. In Shewanella sp. (strain ANA-3), this protein is L-threonine 3-dehydrogenase.